Here is a 534-residue protein sequence, read N- to C-terminus: Calmodulin calcium-dependent NAD kinase (534 aa).

A calmodulin-binding region spans residues 167–196 (QKVPKLKDFVMAATRKQRFERVTKDLKVKR). 238 to 245 (GGMGAGKS) contacts ATP.

Interacts with calmodulin (CaM) in a calcium Ca(2+)-dependent manner in vitro. Requires Ca(2+) as cofactor.

The protein localises to the mitochondrion outer membrane. It catalyses the reaction NAD(+) + ATP = ADP + NADP(+) + H(+). Functionally, phosphorylates NAD(+) to produce NADP(+) in a calmodulin calcium-dependent manner. Does not possess activity toward NADH. Has broad specificity for the phosphoryl donor, as ATP, CTP, GTP and UTP can be used interchangeably and produce similar efficiencies. May play a role in producing NADP(H) needed to regulate the elicitor-induced reactive oxygen species (ROS) burst by sustaining the activity of NADPH oxidases. Does not seem to play a role in photosynthesis-driven growth. The polypeptide is Calmodulin calcium-dependent NAD kinase (Arabidopsis thaliana (Mouse-ear cress)).